Consider the following 127-residue polypeptide: Fluoride-specific ion channel FluC (127 aa).

4 helical membrane passes run 4 to 24 (LLLA…MLSM), 35 to 55 (IGTL…FAWF), 71 to 91 (TGFC…VFLL), and 103 to 123 (VLIN…LFSA). Glycine 75 and threonine 78 together coordinate Na(+).

It belongs to the fluoride channel Fluc/FEX (TC 1.A.43) family.

Its subcellular location is the cell inner membrane. It carries out the reaction fluoride(in) = fluoride(out). With respect to regulation, na(+) is not transported, but it plays an essential structural role and its presence is essential for fluoride channel function. Its function is as follows. Fluoride-specific ion channel. Important for reducing fluoride concentration in the cell, thus reducing its toxicity. This is Fluoride-specific ion channel FluC from Salmonella agona (strain SL483).